The following is a 91-amino-acid chain: Insertion element IS1 2 protein InsA (91 aa).

This sequence belongs to the IS1 elements InsA family.

Absolutely required for transposition of IS1. The polypeptide is Insertion element IS1 2 protein InsA (insA2) (Escherichia coli (strain K12)).